We begin with the raw amino-acid sequence, 337 residues long: Tryptophan--tRNA ligase (337 aa).

ATP-binding positions include 12–14 (QPS) and 21–22 (GN). A 'HIGH' region motif is present at residues 13 to 22 (PSADSLHLGN). Residue aspartate 138 coordinates L-tryptophan. ATP contacts are provided by residues 150 to 152 (GDD), isoleucine 189, and 198 to 202 (KMSKS). The short motif at 198–202 (KMSKS) is the 'KMSKS' region element.

This sequence belongs to the class-I aminoacyl-tRNA synthetase family. Homodimer.

It is found in the cytoplasm. The enzyme catalyses tRNA(Trp) + L-tryptophan + ATP = L-tryptophyl-tRNA(Trp) + AMP + diphosphate + H(+). Catalyzes the attachment of tryptophan to tRNA(Trp). This Leifsonia xyli subsp. xyli (strain CTCB07) protein is Tryptophan--tRNA ligase.